The chain runs to 511 residues: Probable cytochrome P450 4d21 (511 aa).

Residue C456 coordinates heme.

This sequence belongs to the cytochrome P450 family. Heme serves as cofactor.

It localises to the endoplasmic reticulum membrane. It is found in the microsome membrane. In terms of biological role, may be involved in the metabolism of insect hormones and in the breakdown of synthetic insecticides. The polypeptide is Probable cytochrome P450 4d21 (Cyp4d21) (Drosophila melanogaster (Fruit fly)).